A 549-amino-acid polypeptide reads, in one-letter code: Oxygen-dependent choline dehydrogenase (549 aa).

Residue 4-33 participates in FAD binding; the sequence is DFVIIGSGSAGSALAYRLSEDGKNSVLVIE. Catalysis depends on H465, which acts as the Proton acceptor.

The protein belongs to the GMC oxidoreductase family. FAD serves as cofactor.

The enzyme catalyses choline + A = betaine aldehyde + AH2. The catalysed reaction is betaine aldehyde + NAD(+) + H2O = glycine betaine + NADH + 2 H(+). It participates in amine and polyamine biosynthesis; betaine biosynthesis via choline pathway; betaine aldehyde from choline (cytochrome c reductase route): step 1/1. In terms of biological role, involved in the biosynthesis of the osmoprotectant glycine betaine. Catalyzes the oxidation of choline to betaine aldehyde and betaine aldehyde to glycine betaine at the same rate. The sequence is that of Oxygen-dependent choline dehydrogenase from Rhizobium etli (strain CIAT 652).